The primary structure comprises 1033 residues: Ubiquitin carboxyl-terminal hydrolase 48 (1033 aa).

A USP domain is found at valine 89–glutamine 419. Cysteine 98 serves as the catalytic Nucleophile. Residue histidine 351 is the Proton acceptor of the active site. DUSP domains are found at residues glutamine 457–cysteine 552, asparagine 567–cysteine 690, and methionine 710–alanine 823. The tract at residues glutamate 610–glutamate 639 is disordered. Residues alanine 878–glutamine 920 form a disordered region. Residues arginine 931–alanine 1007 enclose the Ubiquitin-like domain.

This sequence belongs to the peptidase C19 family.

The protein localises to the cytoplasm. The protein resides in the nucleus. The catalysed reaction is Thiol-dependent hydrolysis of ester, thioester, amide, peptide and isopeptide bonds formed by the C-terminal Gly of ubiquitin (a 76-residue protein attached to proteins as an intracellular targeting signal).. Recognizes and hydrolyzes the peptide bond at the C-terminal Gly of ubiquitin. Involved in the processing of poly-ubiquitin precursors as well as that of ubiquitinated proteins. The sequence is that of Ubiquitin carboxyl-terminal hydrolase 48 (USP48) from Gallus gallus (Chicken).